Here is a 377-residue protein sequence, read N- to C-terminus: Nitric oxide reductase FlRd-NAD(+) reductase (377 aa).

It belongs to the FAD-dependent oxidoreductase family. FAD is required as a cofactor.

Its subcellular location is the cytoplasm. The catalysed reaction is 2 reduced [nitric oxide reductase rubredoxin domain] + NAD(+) + H(+) = 2 oxidized [nitric oxide reductase rubredoxin domain] + NADH. Its pathway is nitrogen metabolism; nitric oxide reduction. One of at least two accessory proteins for anaerobic nitric oxide (NO) reductase. Reduces the rubredoxin moiety of NO reductase. In Escherichia coli O139:H28 (strain E24377A / ETEC), this protein is Nitric oxide reductase FlRd-NAD(+) reductase.